The following is an 81-amino-acid chain: Small ribosomal subunit protein uS17 (81 aa).

This sequence belongs to the universal ribosomal protein uS17 family. In terms of assembly, part of the 30S ribosomal subunit.

One of the primary rRNA binding proteins, it binds specifically to the 5'-end of 16S ribosomal RNA. This chain is Small ribosomal subunit protein uS17, found in Methylocella silvestris (strain DSM 15510 / CIP 108128 / LMG 27833 / NCIMB 13906 / BL2).